We begin with the raw amino-acid sequence, 437 residues long: Phosphoethanolamine N-methyltransferase 2 (437 aa).

Residues 186–187 and Tyr195 contribute to the N-methylethanolamine phosphate site; that span reads QY. S-adenosyl-L-homocysteine-binding positions include 204-205, Gly232, Asp254, 281-282, and Arg298; these read IS and DA. Residues Tyr329, Tyr343, 347-349, and Lys415 each bind N-methylethanolamine phosphate; that span reads RAY.

It belongs to the class I-like SAM-binding methyltransferase superfamily.

It catalyses the reaction N-methylethanolamine phosphate + S-adenosyl-L-methionine = N,N-dimethylethanolamine phosphate + S-adenosyl-L-homocysteine + H(+). It carries out the reaction N,N-dimethylethanolamine phosphate + S-adenosyl-L-methionine = phosphocholine + S-adenosyl-L-homocysteine + H(+). It functions in the pathway phospholipid metabolism; phosphatidylcholine biosynthesis; phosphocholine from phosphoethanolamine. With respect to regulation, feedback inhibition by phosphatidylcholine and also by S-adenosylhomocysteine. In terms of biological role, catalyzes the last two methylation reactions in the synthesis of phosphocholine, by converting phospho-monomethylethanolamine (N-methylethanolamine phosphate) into phospho-dimethylethanolamine (N,N-dimethylethanolamine phosphate) and the latter into phosphocholine. Phosphocholine is a precursor for phosphatidylcholine, a major component in membranes and a precursor itself in the production of glycoconjugates secreted by parasitic nematodes to avoid host immune responses. The chain is Phosphoethanolamine N-methyltransferase 2 from Caenorhabditis elegans.